The sequence spans 53 residues: HOXB-AS3 peptide (53 aa).

Residues methionine 1 to tryptophan 53 form a disordered region.

As to quaternary structure, interacts with HNRNPA1 (via the RGG-box). Interacts with IGF2BP2.

Functionally, blocks the binding of HNRNPA1 to the intronic sequences flanking exon 9 of the PKM gene by competitively binding to the HNRNPA1 RGG-box motif. This inhibits inclusion of exon 9 and promotes inclusion of exon 10, suppressing formation of the PKM M2 isoform and promoting production of the M1 isoform. Also suppresses HNRNPA1-mediated processing of microRNA 18a (miR-18a). Promotes MYC stability through interaction with IGF2BP2. This chain is HOXB-AS3 peptide, found in Homo sapiens (Human).